Here is a 612-residue protein sequence, read N- to C-terminus: MEDLDTKIKTLKNMGVSESDAKDSLERCGYDVESAAEFIFSGQLEKSRLVPIMSSTSIASSLPSYQDTFFLPSPRKRRRLPGRIGTVLKPSALFPAIAPFLFVVFEIPVALNTFVHATCKGLLFAEDNASFHRPFTDVSAHLSSSSLSKYNHHSNHRLASPGWWYGEDSCISQSLDPRSVMQVQTIRAFEFLFSSHRLYLDTVHITAALSQVLAGLGNTNTSMSDGDCIAAFLSSYFSPPNAEFDSTFCSTLSSLTNSEKPTYIFNFKPNSTPDLRLSIESCLDLLLHPPSSAQKNWSWIKHVGKVFCCSLPGNNASGTPRFLLTPKIDLSKCIIENRDEMLRRYQLETVYRKTLLEWEDLYKRLTGVTLTDKDIGELLTDGQQFLEKRNPALSSHLQLLKETLQTKISTLISNTNATQHKLSTLYRGMQNKCTRRLLAVIIEPSIIYICLKNSAVQSNRNVSPSANHNEQWYLVRFTTSATISQDSPPCIVEPVTFEEVDLEFEKHISYHNRLLIYVDDDCEASTRTVIPTSVKNFIAEDNEYFDDELAGIIHSPTVSTRSSRSSDVSEYDLEDQGGLQLTVPHINTDVQCHRSRNSACEFPESMHVEHSG.

The UBA domain maps to 3–42 (DLDTKIKTLKNMGVSESDAKDSLERCGYDVESAAEFIFSG). Position 595 is a phosphoserine (Ser595).

It localises to the cytoplasm. The protein resides in the nucleus. The polypeptide is UBA domain-containing protein 6 (ucp6) (Schizosaccharomyces pombe (strain 972 / ATCC 24843) (Fission yeast)).